The chain runs to 498 residues: Glycerol kinase (498 aa).

Threonine 14 contacts ADP. Residues threonine 14 and threonine 15 each contribute to the ATP site. Threonine 14 contacts sn-glycerol 3-phosphate. Arginine 18 is a binding site for ADP. Sn-glycerol 3-phosphate contacts are provided by arginine 84, glutamate 85, tyrosine 136, and aspartate 246. Glycerol contacts are provided by arginine 84, glutamate 85, tyrosine 136, aspartate 246, and glutamine 247. 2 residues coordinate ADP: threonine 268 and glycine 311. Residues threonine 268, glycine 311, glutamine 315, and glycine 412 each contribute to the ATP site. Positions 412 and 416 each coordinate ADP.

This sequence belongs to the FGGY kinase family.

It carries out the reaction glycerol + ATP = sn-glycerol 3-phosphate + ADP + H(+). Its pathway is polyol metabolism; glycerol degradation via glycerol kinase pathway; sn-glycerol 3-phosphate from glycerol: step 1/1. Its activity is regulated as follows. Inhibited by fructose 1,6-bisphosphate (FBP). In terms of biological role, key enzyme in the regulation of glycerol uptake and metabolism. Catalyzes the phosphorylation of glycerol to yield sn-glycerol 3-phosphate. The sequence is that of Glycerol kinase from Leptospira biflexa serovar Patoc (strain Patoc 1 / Ames).